A 457-amino-acid chain; its full sequence is 1-carboxybiuret hydrolase subunit AtzE (457 aa).

Catalysis depends on charge relay system residues lysine 74 and serine 150. Catalysis depends on serine 174, which acts as the Acyl-ester intermediate.

It belongs to the amidase family. As to quaternary structure, heterotetramer consisting of 2 AtzE and 2 AtzG subunits.

The catalysed reaction is 1-carboxybiuret + H2O = urea-1,3-dicarboxylate + NH4(+). The protein operates within xenobiotic degradation; atrazine degradation. Its function is as follows. Hydrolyzes 1-carboxybiuret to urea-1,3-dicarboxylate and NH(3). This is 1-carboxybiuret hydrolase subunit AtzE from Pseudomonas sp. (strain ADP).